The sequence spans 467 residues: UDP-N-acetylmuramate--L-alanine ligase (467 aa).

123-129 (GTHGKST) provides a ligand contact to ATP.

It belongs to the MurCDEF family.

The protein resides in the cytoplasm. It carries out the reaction UDP-N-acetyl-alpha-D-muramate + L-alanine + ATP = UDP-N-acetyl-alpha-D-muramoyl-L-alanine + ADP + phosphate + H(+). Its pathway is cell wall biogenesis; peptidoglycan biosynthesis. Functionally, cell wall formation. This is UDP-N-acetylmuramate--L-alanine ligase from Arthrobacter sp. (strain FB24).